The sequence spans 170 residues: UPF0690 protein C1orf52 homolog (170 aa).

Disordered regions lie at residues 1–56 (MAAE…PDEL) and 124–170 (SNVY…KRKV). Basic and acidic residues predominate over residues 46–56 (DTKKLPGPDEL). A compositionally biased stretch (acidic residues) spans 144–159 (EEEEAREDSPPSDDEQ).

Belongs to the UPF0690 family.

The chain is UPF0690 protein C1orf52 homolog from Xenopus tropicalis (Western clawed frog).